The primary structure comprises 307 residues: Barttin (307 aa).

The Cytoplasmic segment spans residues 1-5 (MADEK). Residues 1–72 (MADEKTFRIG…VPADSDFQGI (72 aa)) form a regulates channel membrane trafficking and anion conductance region. The chain crosses the membrane as a helical span at residues 6–26 (TFRIGFIVLGLFLLSLGTFLM). Residues 27–32 (SHDRPQ) lie on the Extracellular side of the membrane. Residues 33 to 53 (VYGTFYAMGSVMVIGGVIWSM) traverse the membrane as a helical segment. S-palmitoyl cysteine attachment occurs at residues Cys-54 and Cys-56. Residues 54–307 (CQCYPKITFV…ELGFEPDIQG (254 aa)) are Cytoplasmic-facing. Phosphoserine is present on residues Ser-79 and Ser-107. Disordered regions lie at residues 135 to 154 (TGAS…WMEA) and 161 to 224 (GSDE…RGPL). Over residues 161–171 (GSDENEGEKSH) the composition is skewed to basic and acidic residues. Ser-162 is subject to Phosphoserine. Over residues 172 to 183 (SQSSPSVGPQGS) the composition is skewed to low complexity. The segment covering 198-207 (SEGSSLQPSP) has biased composition (polar residues). Ser-228 and Ser-289 each carry phosphoserine. The segment at 255–307 (RKQQWSLRMKGETVQARAEEPEQEEEDLYYGLPDSPGNPLPDKELGFEPDIQG) is disordered.

In terms of assembly, interacts with CLCNK channels. Forms probably heteromers with CLCNKA in the thin ascending limb of Henle and with CLCNKB in the thick ascending limb and more distal segments. In terms of processing, palmitoylation is necessary for activation of plasma membrane-inserted CLC-K/barttin channels. Expression is evident in inner and outer stripes of the outer medulla of the kidney, most probably representing thin limbs of Henle's loop together with some collecting duct coursing through the outer stripe. In situ hybridization in fetal kidney at 18.5 dpc revealed a clear continuity between hybridization signals from the thin limb of Henle's loop and the distal convoluted tubule, suggesting that part of the expression pattern may result from expression in the thick ascending limb of Henle's loop. In addition, strong signals are present in a subset of cortical tubules, representing distal convoluted tubules or cortical collecting duct. Strong expression is also observed in the inner medulla of the kidney. This expression does not extend all the way to the tip of the papilla. Thus this signal most probably represents cells of the thin ascending limbs. In the inner ear, strong and exclusive expression is detected in marginal cells of the stria vascularis. In addition to cochlear signal, expression is observed in dark cells localized at the base of the crista ampullaris of the vestibular organ.

It is found in the basolateral cell membrane. Functionally, regulatory subunit of anion-selective CLCNKA:BSND and CLCNKB:BSND heteromeric channels involved in basolateral chloride conductance along the nephron to achieve urine concentration and maintain systemic acid-base homeostasis, and in the stria vascularis of the inner ear to establish the endocochlear potential necessary for normal hearing. Most likely acts as a chaperone that allosterically regulates proper sorting of CLCNKA:BSND and CLCNKB:BSND channels at the basolateral plasma membrane domain and functional switch to ion conducting state. Mediates constitutive opening of channel common gates. This chain is Barttin, found in Mus musculus (Mouse).